A 418-amino-acid polypeptide reads, in one-letter code: Magnesium-chelatase subunit ChlI-2, chloroplastic (418 aa).

The transit peptide at 1 to 55 (MASLLGRSPSSILTCPRISSPSSTSSMSHLCFGPEKLSGRIQFNPKKNRSRYHVS) directs the protein to the chloroplast. Val56 is modified (N-acetylvaline). 2 cysteine pairs are disulfide-bonded: Cys96–Cys187 and Cys348–Cys390. 113 to 120 (GDRGTGKS) provides a ligand contact to ATP.

Belongs to the Mg-chelatase subunits D/I family. The magnesium chelatase complex is a heterotrimer consisting of subunits CHLI, CHLD and CHLH. As to expression, expressed in leaves.

It localises to the plastid. It is found in the chloroplast. The enzyme catalyses protoporphyrin IX + Mg(2+) + ATP + H2O = Mg-protoporphyrin IX + ADP + phosphate + 3 H(+). The protein operates within porphyrin-containing compound metabolism; chlorophyll biosynthesis. Its activity is regulated as follows. Redox regulation; active in reducing conditions, inactive in oxidizing conditions. Thioredoxins f and m mediate the reversible reductive activation of oxidized CHLI2. Its function is as follows. Involved in chlorophyll biosynthesis. Catalyzes the insertion of magnesium ion into protoporphyrin IX to yield Mg-protoporphyrin IX. The reaction takes place in two steps, with an ATP-dependent activation followed by an ATP-dependent chelation step. Possesses low affinity for ATP and may play a limited role in chlorophyll biosynthesis, and contributes to the assembly of the Mg-chelatase complex. The protein is Magnesium-chelatase subunit ChlI-2, chloroplastic (CHLI2) of Arabidopsis thaliana (Mouse-ear cress).